The chain runs to 291 residues: Elongation factor Ts (291 aa).

Positions 79-82 are involved in Mg(2+) ion dislocation from EF-Tu; it reads TDFV.

It belongs to the EF-Ts family.

It localises to the cytoplasm. Associates with the EF-Tu.GDP complex and induces the exchange of GDP to GTP. It remains bound to the aminoacyl-tRNA.EF-Tu.GTP complex up to the GTP hydrolysis stage on the ribosome. The polypeptide is Elongation factor Ts (Anaplasma marginale (strain Florida)).